The chain runs to 435 residues: Glucoside xylosyltransferase 1 (435 aa).

Topologically, residues 1-6 (MRRYLR) are cytoplasmic. A helical; Signal-anchor for type II membrane protein membrane pass occupies residues 7–29 (VVGLCLACGFCSLLYAFSQLAVS). Topologically, residues 30-435 (LEEGAAVGRR…NRYDTPPKER (406 aa)) are lumenal. Asn168 and Asn232 each carry an N-linked (GlcNAc...) asparagine glycan.

This sequence belongs to the glycosyltransferase 8 family.

It localises to the membrane. The enzyme catalyses 3-O-(beta-D-glucosyl)-L-seryl-[EGF-like domain protein] + UDP-alpha-D-xylose = 3-O-[alpha-D-xylosyl-(1-&gt;3)-beta-D-glucosyl]-L-seryl-[EGF-like domain protein] + UDP + H(+). Glycosyltransferase which elongates the O-linked glucose attached to EGF-like repeats in the extracellular domain of Notch proteins by catalyzing the addition of xylose. This chain is Glucoside xylosyltransferase 1 (Gxylt1), found in Rattus norvegicus (Rat).